Here is an 88-residue protein sequence, read N- to C-terminus: Small ribosomal subunit protein uS15 (88 aa).

The protein belongs to the universal ribosomal protein uS15 family. As to quaternary structure, part of the 30S ribosomal subunit. Forms a bridge to the 50S subunit in the 70S ribosome, contacting the 23S rRNA.

In terms of biological role, one of the primary rRNA binding proteins, it binds directly to 16S rRNA where it helps nucleate assembly of the platform of the 30S subunit by binding and bridging several RNA helices of the 16S rRNA. Forms an intersubunit bridge (bridge B4) with the 23S rRNA of the 50S subunit in the ribosome. The protein is Small ribosomal subunit protein uS15 of Leptospira interrogans serogroup Icterohaemorrhagiae serovar copenhageni (strain Fiocruz L1-130).